The sequence spans 146 residues: Mitochondrial import receptor subunit TOM20 homolog B (146 aa).

Residues 1-5 (MMGGS) lie on the Mitochondrial intermembrane side of the membrane. A helical membrane pass occupies residues 6 to 25 (SSRIAAGLGAALFVGYCIYF). The Cytoplasmic segment spans residues 26–146 (DRKRRSDPNY…AQSISDDDIE (121 aa)). The segment covering 37 to 47 (NKLRERRKKQK) has biased composition (basic residues). The interval 37-56 (NKLRERRKKQKAAQEKAGLS) is disordered. Position 141 is a phosphoserine (serine 141).

The protein belongs to the Tom20 family. In terms of assembly, forms part of the preprotein translocase complex of the outer mitochondrial membrane (TOM complex). Interacts with tom22.

The protein resides in the mitochondrion outer membrane. Central component of the receptor complex responsible for the recognition and translocation of cytosolically synthesized mitochondrial preproteins. Together with tom22 functions as the transit peptide receptor at the surface of the mitochondrion outer membrane and facilitates the movement of preproteins into the tom40 translocation pore. The protein is Mitochondrial import receptor subunit TOM20 homolog B (tomm20b) of Danio rerio (Zebrafish).